The primary structure comprises 85 residues: Phosphocarrier protein HPr (85 aa).

An HPr domain is found at 1–85; the sequence is MFQQEVTITA…HLVKLMAELE (85 aa). His15 serves as the catalytic Pros-phosphohistidine intermediate.

Belongs to the HPr family.

It is found in the cytoplasm. In terms of biological role, general (non sugar-specific) component of the phosphoenolpyruvate-dependent sugar phosphotransferase system (sugar PTS). This major carbohydrate active-transport system catalyzes the phosphorylation of incoming sugar substrates concomitantly with their translocation across the cell membrane. The phosphoryl group from phosphoenolpyruvate (PEP) is transferred to the phosphoryl carrier protein HPr by enzyme I. Phospho-HPr then transfers it to the PTS EIIA domain. In Escherichia coli O157:H7, this protein is Phosphocarrier protein HPr (ptsH).